A 306-amino-acid chain; its full sequence is Aspartate carbamoyltransferase catalytic subunit (306 aa).

Residues Arg-56 and Thr-57 each coordinate carbamoyl phosphate. Lys-84 lines the L-aspartate pocket. Carbamoyl phosphate is bound by residues Arg-106, His-136, and Gln-139. 2 residues coordinate L-aspartate: Arg-169 and Arg-221. Carbamoyl phosphate-binding residues include Ala-262 and Pro-263.

It belongs to the aspartate/ornithine carbamoyltransferase superfamily. ATCase family. Heterododecamer (2C3:3R2) of six catalytic PyrB chains organized as two trimers (C3), and six regulatory PyrI chains organized as three dimers (R2).

The enzyme catalyses carbamoyl phosphate + L-aspartate = N-carbamoyl-L-aspartate + phosphate + H(+). Its pathway is pyrimidine metabolism; UMP biosynthesis via de novo pathway; (S)-dihydroorotate from bicarbonate: step 2/3. In terms of biological role, catalyzes the condensation of carbamoyl phosphate and aspartate to form carbamoyl aspartate and inorganic phosphate, the committed step in the de novo pyrimidine nucleotide biosynthesis pathway. This chain is Aspartate carbamoyltransferase catalytic subunit, found in Streptococcus gordonii (strain Challis / ATCC 35105 / BCRC 15272 / CH1 / DL1 / V288).